A 239-amino-acid chain; its full sequence is Orotidine 5'-phosphate decarboxylase (239 aa).

Substrate is bound by residues aspartate 10, lysine 33, 60-69, threonine 124, arginine 186, glutamine 195, glycine 215, and arginine 216; that span reads DLKLYDIPNT. Lysine 62 acts as the Proton donor in catalysis.

The protein belongs to the OMP decarboxylase family. Type 1 subfamily. Homodimer.

The catalysed reaction is orotidine 5'-phosphate + H(+) = UMP + CO2. The protein operates within pyrimidine metabolism; UMP biosynthesis via de novo pathway; UMP from orotate: step 2/2. In terms of biological role, catalyzes the decarboxylation of orotidine 5'-monophosphate (OMP) to uridine 5'-monophosphate (UMP). In Latilactobacillus sakei subsp. sakei (strain 23K) (Lactobacillus sakei subsp. sakei), this protein is Orotidine 5'-phosphate decarboxylase.